Consider the following 73-residue polypeptide: Conotoxin im23b (73 aa).

The N-terminal stretch at 1–22 is a signal peptide; the sequence is MIMRMTLTLFVLVVMTAASASG. Residues 23–28 constitute a propeptide that is removed on maturation; it reads DALTEA. 3 disulfides stabilise this stretch: Cys34/Cys41, Cys45/Cys55, and Cys56/Cys71.

Belongs to the conotoxin K superfamily. Expressed by the venom duct.

The protein localises to the secreted. In terms of biological role, neurotoxin that induces excitatory symptoms in mice following intracranial administration. No symptoms are observed after intraperitoneal and intravenous (tail vein) injections. In Conus imperialis (Imperial cone), this protein is Conotoxin im23b.